The following is a 295-amino-acid chain: Protease HtpX (295 aa).

2 helical membrane-spanning segments follow: residues 4–24 and 41–61; these read ILLF…TLSL and SQLL…SLFI. Position 147 (histidine 147) interacts with Zn(2+). Glutamate 148 is an active-site residue. Zn(2+) is bound at residue histidine 151. 2 consecutive transmembrane segments (helical) span residues 158-178 and 199-219; these read VTLA…ARII and IATI…VMWF. Residue glutamate 224 participates in Zn(2+) binding.

Belongs to the peptidase M48B family. Zn(2+) serves as cofactor.

The protein localises to the cell inner membrane. The chain is Protease HtpX from Pseudomonas fluorescens (strain Pf0-1).